The sequence spans 213 residues: Adenylate kinase (213 aa).

10–15 (GSGKGT) provides a ligand contact to ATP. Residues 30–59 (STGDLFRTNIENDTPLGKEIKQIVENGQLV) are NMP. AMP-binding positions include threonine 31, arginine 36, 57-59 (QLV), 85-88 (GFPR), and glutamine 92. The interval 121–158 (GRRICQSCCKIFNIYTLPTKEKEICDFCQGILYQRKDD) is LID. Arginine 122 lines the ATP pocket. Cysteine 125 and cysteine 128 together coordinate Zn(2+). Residue 131-132 (IF) coordinates ATP. Residues cysteine 145 and cysteine 148 each contribute to the Zn(2+) site. Positions 155 and 166 each coordinate AMP. Lysine 194 is an ATP binding site.

The protein belongs to the adenylate kinase family. As to quaternary structure, monomer.

The protein resides in the cytoplasm. It catalyses the reaction AMP + ATP = 2 ADP. Its pathway is purine metabolism; AMP biosynthesis via salvage pathway; AMP from ADP: step 1/1. Functionally, catalyzes the reversible transfer of the terminal phosphate group between ATP and AMP. Plays an important role in cellular energy homeostasis and in adenine nucleotide metabolism. The polypeptide is Adenylate kinase (Borrelia duttonii (strain Ly)).